Reading from the N-terminus, the 258-residue chain is Imidazole glycerol phosphate synthase subunit HisF (258 aa).

Residues D11 and D130 contribute to the active site.

The protein belongs to the HisA/HisF family. As to quaternary structure, heterodimer of HisH and HisF.

The protein localises to the cytoplasm. It catalyses the reaction 5-[(5-phospho-1-deoxy-D-ribulos-1-ylimino)methylamino]-1-(5-phospho-beta-D-ribosyl)imidazole-4-carboxamide + L-glutamine = D-erythro-1-(imidazol-4-yl)glycerol 3-phosphate + 5-amino-1-(5-phospho-beta-D-ribosyl)imidazole-4-carboxamide + L-glutamate + H(+). Its pathway is amino-acid biosynthesis; L-histidine biosynthesis; L-histidine from 5-phospho-alpha-D-ribose 1-diphosphate: step 5/9. IGPS catalyzes the conversion of PRFAR and glutamine to IGP, AICAR and glutamate. The HisF subunit catalyzes the cyclization activity that produces IGP and AICAR from PRFAR using the ammonia provided by the HisH subunit. The chain is Imidazole glycerol phosphate synthase subunit HisF from Methylorubrum extorquens (strain CM4 / NCIMB 13688) (Methylobacterium extorquens).